Consider the following 209-residue polypeptide: Pyridoxal phosphate homeostasis protein (209 aa).

Residue K31 is modified to N6-(pyridoxal phosphate)lysine.

Belongs to the pyridoxal phosphate-binding protein YggS/PROSC family.

Its function is as follows. Pyridoxal 5'-phosphate (PLP)-binding protein, which is involved in PLP homeostasis. This chain is Pyridoxal phosphate homeostasis protein, found in Deinococcus radiodurans (strain ATCC 13939 / DSM 20539 / JCM 16871 / CCUG 27074 / LMG 4051 / NBRC 15346 / NCIMB 9279 / VKM B-1422 / R1).